The following is a 316-amino-acid chain: MSDISKASLPKAIFLMGPTASGKTALAIELRKILPVELISVDSALIYKGMDIGTAKPNVEELLAAPHRLLDIRDPSQAYSAADFRRDALAEMADITAAGRIPLLVGGTMLYFKALLEGLSPLPSADPEVRARIEQQAAEQGWESLHRQLQEVDPVAAARIHPNDPQRLSRALEVFFISGKTLTELTQTSGDALPYQVHQFAIAPASRELLHQRIEQRFHQMLASGFEAEVRALFARGDLHTDLPSIRCVGYRQMWSYLEGEISYDEMVYRGVCATRQLAKRQITWLRGWEGVHWLDSEKPEQARDEVLQVVGAIAG.

An ATP-binding site is contributed by 17–24 (GPTASGKT). 19-24 (TASGKT) is a binding site for substrate. Interaction with substrate tRNA regions lie at residues 42-45 (DSAL), 166-170 (QRLSR), 247-252 (RCVGYR), and 280-287 (KRQITWLR).

The protein belongs to the IPP transferase family. As to quaternary structure, monomer. It depends on Mg(2+) as a cofactor.

It carries out the reaction adenosine(37) in tRNA + dimethylallyl diphosphate = N(6)-dimethylallyladenosine(37) in tRNA + diphosphate. Functionally, catalyzes the transfer of a dimethylallyl group onto the adenine at position 37 in tRNAs that read codons beginning with uridine, leading to the formation of N6-(dimethylallyl)adenosine (i(6)A). The chain is tRNA dimethylallyltransferase from Escherichia coli O127:H6 (strain E2348/69 / EPEC).